Reading from the N-terminus, the 349-residue chain is Anthranilate phosphoribosyltransferase (349 aa).

5-phospho-alpha-D-ribose 1-diphosphate contacts are provided by residues G82, 85–86 (GD), 92–95 (NVST), 110–118 (KHGNRAVSG), and S122. G82 is an anthranilate binding site. Mg(2+) is bound at residue S94. N113 serves as a coordination point for anthranilate. R168 is a binding site for anthranilate. D227 and E228 together coordinate Mg(2+).

This sequence belongs to the anthranilate phosphoribosyltransferase family. In terms of assembly, homodimer. Mg(2+) is required as a cofactor.

It carries out the reaction N-(5-phospho-beta-D-ribosyl)anthranilate + diphosphate = 5-phospho-alpha-D-ribose 1-diphosphate + anthranilate. It functions in the pathway amino-acid biosynthesis; L-tryptophan biosynthesis; L-tryptophan from chorismate: step 2/5. Catalyzes the transfer of the phosphoribosyl group of 5-phosphorylribose-1-pyrophosphate (PRPP) to anthranilate to yield N-(5'-phosphoribosyl)-anthranilate (PRA). The polypeptide is Anthranilate phosphoribosyltransferase (Pseudomonas putida (strain ATCC 700007 / DSM 6899 / JCM 31910 / BCRC 17059 / LMG 24140 / F1)).